The primary structure comprises 366 residues: Acetylserotonin O-methyltransferase 3 (366 aa).

G209, D232, D253, and K267 together coordinate S-adenosyl-L-homocysteine. H271 functions as the Proton acceptor in the catalytic mechanism. Residues E302 and E332 contribute to the active site.

It belongs to the class I-like SAM-binding methyltransferase superfamily. Cation-independent O-methyltransferase family. In terms of assembly, homodimer. As to expression, expressed at low levels in roots, shoots, leaves, stems and flowers.

The protein localises to the cytoplasm. The catalysed reaction is N-acetylserotonin + S-adenosyl-L-methionine = melatonin + S-adenosyl-L-homocysteine + H(+). It participates in aromatic compound metabolism; melatonin biosynthesis; melatonin from serotonin: step 1/2. Its function is as follows. Methyltransferase which catalyzes the transfer of a methyl group onto N-acetylserotonin, producing melatonin (N-acetyl-5-methoxytryptamine). The sequence is that of Acetylserotonin O-methyltransferase 3 from Oryza sativa subsp. japonica (Rice).